The sequence spans 42 residues: Purine nucleoside phosphorylase DeoD-type (42 aa).

Position 8–9 (8–9 (SD)) interacts with a purine D-ribonucleoside. Aspartate 9 (proton donor) is an active-site residue.

Belongs to the PNP/UDP phosphorylase family. Homohexamer; trimer of homodimers.

It catalyses the reaction a purine D-ribonucleoside + phosphate = a purine nucleobase + alpha-D-ribose 1-phosphate. It carries out the reaction a purine 2'-deoxy-D-ribonucleoside + phosphate = a purine nucleobase + 2-deoxy-alpha-D-ribose 1-phosphate. Catalyzes the reversible phosphorolytic breakdown of the N-glycosidic bond in the beta-(deoxy)ribonucleoside molecules, with the formation of the corresponding free purine bases and pentose-1-phosphate. The chain is Purine nucleoside phosphorylase DeoD-type from Mycoplasmoides pirum (Mycoplasma pirum).